Here is a 385-residue protein sequence, read N- to C-terminus: Single-stranded DNA-binding protein 4 (385 aa).

The residue at position 1 (M1) is an N-acetylmethionine. The LisH domain maps to 17–49 (AREKLALYVYEYLLHIGAQKSAQTFLSEIRWEK). Disordered stretches follow at residues 122–287 (FQGP…NSSE) and 331–363 (GSGDMDGLPKSSPGAVAGLSNAPGTPRDDGEMA). The span at 245–263 (SPSGNSIPYSSSSPGSYTG) shows a compositional bias: low complexity. Positions 267 to 277 (GGGPPGTPIMP) are enriched in pro residues. At S341 the chain carries Phosphoserine. T355 is subject to Phosphothreonine.

It is found in the nucleus. The chain is Single-stranded DNA-binding protein 4 (SSBP4) from Homo sapiens (Human).